A 453-amino-acid chain; its full sequence is MKEKQFWNRILEFAQERLTRSMYDFYAIQAELIKVEENVATIFLPRSEMEMVWEKQLKDIIVVAGFEIYDAEITPHYIFTKPQDTTSSQVEEATNLTLYNYSPKLVSIPYSDTGLKEKYTFDNFIQGDGNVWAVSAALAVSEDLALTYNPLFIYGGPGLGKTHLLNAIGNEILKNIPNARVKYIPAESFINDFLDHLRLGEMEKFKKTYRSLDLLLIDDIQSLSGKKVATQEEFFNTFNALHDKQKQIVLTSDRSPKHLEGLEERLVTRFSWGLTQTITPPDFETRIAILQSKTEHLGYNFQSDTLEYLAGQFDSNVRDLEGAINDITLIARVKKIKDITIDIAAEAIRARKQDVSQMLVIPIDKIQTEVGNFYGVSIKEMKGSRRLQNIVLARQVAMYLSRELTDNSLPKIGKEFGGKDHTTVIHAHAKIKSLIDQDDNLRLEIESIKKKIK.

The segment at 1–74 is domain I, interacts with DnaA modulators; it reads MKEKQFWNRI…GFEIYDAEIT (74 aa). The segment at 74 to 113 is domain II; it reads TPHYIFTKPQDTTSSQVEEATNLTLYNYSPKLVSIPYSDT. A domain III, AAA+ region region spans residues 114-331; it reads GLKEKYTFDN…GAINDITLIA (218 aa). ATP is bound by residues glycine 158, glycine 160, lysine 161, and threonine 162. A domain IV, binds dsDNA region spans residues 332 to 453; sequence RVKKIKDITI…EIESIKKKIK (122 aa).

This sequence belongs to the DnaA family. In terms of assembly, oligomerizes as a right-handed, spiral filament on DNA at oriC.

The protein localises to the cytoplasm. Its function is as follows. Plays an essential role in the initiation and regulation of chromosomal replication. ATP-DnaA binds to the origin of replication (oriC) to initiate formation of the DNA replication initiation complex once per cell cycle. Binds the DnaA box (a 9 base pair repeat at the origin) and separates the double-stranded (ds)DNA. Forms a right-handed helical filament on oriC DNA; dsDNA binds to the exterior of the filament while single-stranded (ss)DNA is stabiized in the filament's interior. The ATP-DnaA-oriC complex binds and stabilizes one strand of the AT-rich DNA unwinding element (DUE), permitting loading of DNA polymerase. After initiation quickly degrades to an ADP-DnaA complex that is not apt for DNA replication. Binds acidic phospholipids. This Streptococcus pneumoniae serotype 19F (strain G54) protein is Chromosomal replication initiator protein DnaA.